A 355-amino-acid polypeptide reads, in one-letter code: Inositol polyphosphate multikinase (355 aa).

At M1 the chain carries N-acetylmethionine. K31 is an ATP binding site. S97 bears the Phosphoserine mark. ATP-binding positions include 118-120 (ENL) and D131. 127 to 135 (PNILDIKLG) serves as a coordination point for substrate. 2 residues coordinate Ca(2+): E271 and N274. The segment covering 284–304 (FIDDDDDDDDNDDDDDDDAEG) has biased composition (acidic residues). The disordered stretch occupies residues 284 to 317 (FIDDDDDDDDNDDDDDDDAEGSSEGPKDKKTTGS). D325 lines the ATP pocket. G334 contacts Ca(2+).

This sequence belongs to the inositol phosphokinase (IPK) family. As to quaternary structure, interacts with ARG80 and MCM1. It depends on Ca(2+) as a cofactor.

The protein localises to the nucleus. The enzyme catalyses 1D-myo-inositol 1,4,5-trisphosphate + 2 ATP = 1D-myo-inositol 1,3,4,5,6-pentakisphosphate + 2 ADP + 2 H(+). The catalysed reaction is 1D-myo-inositol 1,4,5-trisphosphate + ATP = 1D-myo-inositol 1,4,5,6-tetrakisphosphate + ADP + H(+). It carries out the reaction 1D-myo-inositol 1,4,5-trisphosphate + ATP = 1D-myo-inositol 1,3,4,5-tetrakisphosphate + ADP + H(+). It catalyses the reaction 1D-myo-inositol 1,4,5,6-tetrakisphosphate + ATP = 1D-myo-inositol 1,3,4,5,6-pentakisphosphate + ADP + H(+). The enzyme catalyses a 1,2-diacyl-sn-glycero-3-phospho-(1D-myo-inositol-4,5-bisphosphate) + ATP = a 1,2-diacyl-sn-glycero-3-phospho-(1D-myo-inositol-3,4,5-trisphosphate) + ADP + H(+). Its function is as follows. Inositol phosphate kinase with both monophosphoinositol and diphosphoinositol polyphosphate synthase activities. Able to phosphorylate inositol 1,4,5-trisphosphate (Ins(1,4,5)P3) on both the carbon-3 and carbon-6 positions to synthesize inositol 1,3,4,5-tetrakisphosphate (Ins(1,3,4,5)P4) and inositol 1,4,5,6-tetrakisphosphate (Ins(1,4,5,6)P4), and then to subsequently phosphorylate and convert either isomer of InsP4 to inositol 1,3,4,5,6-pentakisphosphate (Ins(1,3,4,5,6)P5). Its predominant in vivo catalytic function is to convert Ins(1,4,5)P3 to Ins(1,4,5,6)P4 to Ins(1,3,4,5,6)P5 via 6- and 3-kinase activities. It can also use Ins(1,3,4,5,6)P5 as a substrate and act as a diphosphoinositol polyphosphate synthase to generate two different isomers of PP-InsP4. Also has a role in transcription regulation. Forms a complex with ARG80, ARG81 and MCM1 (ArgR-MCM1), which coordinates the expression of arginine anabolic and catabolic genes in response to arginine. Recruits ARG80 and MCM21 to stabilize them. Neither the kinase activity nor inositol phosphates are required for the formation of ArgR-MCM1 transcriptional complexes on DNA promoter elements and the control of arginine metabolism. In contrast, only the catalytic activity is required for PHO gene repression by phosphate and for NCR gene activation in response to nitrogen availability, indicating a role for inositol pyrophosphates in these controls. Inositol polyphosphates may be involved in the regulation of chromatin remodeling of transcription. Regulates nuclear mRNA export via inositol phosphate metabolism. Also has lipid kinase activity, transforming the lipid inositol phosphatidylinositol 4,5-bisphosphate (PI(4,5)P2) into phosphatidylinositol 3,4,5-trisphosphate (PI(3,4,5)P3) in the nucleus. Its kinase activity is necessary for the propagation of most [PSI+] prion variants. In Saccharomyces cerevisiae (strain ATCC 204508 / S288c) (Baker's yeast), this protein is Inositol polyphosphate multikinase (ARG82).